Consider the following 393-residue polypeptide: S-adenosylmethionine synthase 2 (393 aa).

Glutamate 9 provides a ligand contact to Mg(2+). Histidine 15 contacts ATP. Residue glutamate 43 coordinates K(+). 2 residues coordinate L-methionine: glutamate 56 and glutamine 99. Residues 167 to 169 (DGK), 235 to 238 (SGRF), aspartate 246, 252 to 253 (RM), alanine 269, lysine 273, and lysine 277 contribute to the ATP site. Aspartate 246 provides a ligand contact to L-methionine. Lysine 277 is a binding site for L-methionine.

This sequence belongs to the AdoMet synthase family. As to quaternary structure, homotetramer. Mn(2+) is required as a cofactor. Mg(2+) serves as cofactor. It depends on Co(2+) as a cofactor. Requires K(+) as cofactor.

It localises to the cytoplasm. It carries out the reaction L-methionine + ATP + H2O = S-adenosyl-L-methionine + phosphate + diphosphate. The protein operates within amino-acid biosynthesis; S-adenosyl-L-methionine biosynthesis; S-adenosyl-L-methionine from L-methionine: step 1/1. Functionally, catalyzes the formation of S-adenosylmethionine from methionine and ATP. The reaction comprises two steps that are both catalyzed by the same enzyme: formation of S-adenosylmethionine (AdoMet) and triphosphate, and subsequent hydrolysis of the triphosphate. This is S-adenosylmethionine synthase 2 (SAMS2) from Daucus carota (Wild carrot).